A 504-amino-acid polypeptide reads, in one-letter code: Amphoterin-induced protein 3 (504 aa).

Positions Met1–Gly19 are cleaved as a signal peptide. Topologically, residues Thr20 to Thr383 are extracellular. Residues Gly25–Ala61 enclose the LRRNT domain. Cystine bridges form between Cys34–Cys40 and Cys38–Cys47. LRR repeat units follow at residues Ala62–Pro83, Gln86–Asn107, Gly110–Gly133, Ala134–Gly155, Ala158–His178, and His184–Pro207. An N-linked (GlcNAc...) asparagine glycan is attached at Asn107. The LRRCT domain maps to Asn219–Ser275. 3 disulfide bridges follow: Cys223-Cys251, Cys225-Cys273, and Cys300-Cys352. N-linked (GlcNAc...) asparagine glycosylation is found at Asn272, Asn301, Asn362, and Asn368. Residues Pro277–Ser370 form the Ig-like C2-type domain. A helical transmembrane segment spans residues Gly384–Ala404. Residues Pro405–Thr504 are Cytoplasmic-facing. A disordered region spans residues Thr422 to Ala448. Positions Ser424–Pro440 are enriched in polar residues.

Belongs to the immunoglobulin superfamily. AMIGO family. Binds AMIGO1 or AMIGO2.

The protein resides in the membrane. Its function is as follows. May mediate heterophilic cell-cell interaction. May contribute to signal transduction through its intracellular domain. This Homo sapiens (Human) protein is Amphoterin-induced protein 3.